The following is a 270-amino-acid chain: Molybdenum-pterin-binding protein MopB (270 aa).

Mop domains lie at 131–197 (RTSA…LLAG) and 203–269 (RLSV…ILAL).

This sequence belongs to the ModE family.

This chain is Molybdenum-pterin-binding protein MopB (mopB), found in Rhodobacter capsulatus (Rhodopseudomonas capsulata).